Here is a 611-residue protein sequence, read N- to C-terminus: Immunoglobulin superfamily member 8 (611 aa).

A signal peptide spans 1–25; it reads MGVPSPTPLSSLLLLLLILGTRCYA. 4 consecutive Ig-like C2-type domains span residues 26–143, 160–284, 301–422, and 429–554; these read RQVH…AKVE, PRGR…WVQV, SQLA…EAAS, and PVHV…ADYS. At 26–577 the chain is on the extracellular side; it reads RQVHVPRGPL…VYPYTHAVDT (552 aa). The cysteines at positions 47 and 125 are disulfide-linked. Asn-48 and Asn-137 each carry an N-linked (GlcNAc...) asparagine glycan. Cys-184 and Cys-268 form a disulfide bridge. An EWI motif motif is present at residues 272–274; the sequence is EWI. Intrachain disulfides connect Cys-324-Cys-404 and Cys-460-Cys-542. Asn-325 carries an N-linked (GlcNAc...) asparagine glycan. Phosphoserine is present on Ser-516. A helical membrane pass occupies residues 578–598; that stretch reads LFVPLLVGTGVALVTGASVLA. Residues 599–611 are Cytoplasmic-facing; that stretch reads TITCCFMKRMRKR. 2 S-palmitoyl cysteine lipidation sites follow: Cys-602 and Cys-603.

Interacts directly with CD82 and CD9/tetraspanin-29. Also interacts with integrin alpha-3/beta-1 and integrin alpha-4/beta-1. Part of a complex composed of CD9, PTGFRN and CD81. Interacts with CD81/tetraspanin-28. Expressed in lymphocytes as well as in many tissues with higher expression in brain. Detected in all regions of the brain with weak expression in the pituitary. Expressed selectively by neurons but not by glial cells. Expressed in myoblasts (at protein level).

Its subcellular location is the cell membrane. Its function is as follows. Member of the immunoglobulin superfamily (IgSF) that links tetraspanin-enriched microdomains to the actin cytoskeleton and plays several important roles in innate and adaptive immunity. Acts as an inducible receptor of HSPA8 on dendritic cells to enhance the CCL21/SLC-dependent migration of activated mature dendritic cells while attenuating their antigen-specific stimulatory capacities. In complex with alpha-actinins ACTN1 and ACTN4, regulates actin dynamics in the immune synapse and subsequent T-cell activation. Inhibits the entry of several viruses such as hepatitis C Virus (HCV) or HIV-1. Mechanistically, promotes a change in CD81 organization at the plasma membrane by significantly restricting its diffusion which in turn influences CD81 interaction with Claudin-1/CLDN1, preventing CLDN1 from acting as a co-receptor required for HCV entry. Accumulates at the presynaptic terminal, the producer cell side of the virological synapse, to prevent HIV-1 Env-mediated cell-cell fusion. Highly expressed on malignant cells with antigen presentation defects, interacts with NK receptor KLRA9 to suppress NK-cell cytotoxicity. May participate in the regulation of neurite outgrowth and maintenance of the neural network in the adult brain. The polypeptide is Immunoglobulin superfamily member 8 (Igsf8) (Mus musculus (Mouse)).